Here is a 105-residue protein sequence, read N- to C-terminus: Large ribosomal subunit protein uL24 (105 aa).

Residues 40–61 (RIKKHTPQSANERGASSGGIVT) are disordered.

It belongs to the universal ribosomal protein uL24 family. Part of the 50S ribosomal subunit.

Its function is as follows. One of two assembly initiator proteins, it binds directly to the 5'-end of the 23S rRNA, where it nucleates assembly of the 50S subunit. In terms of biological role, one of the proteins that surrounds the polypeptide exit tunnel on the outside of the subunit. The protein is Large ribosomal subunit protein uL24 of Mycobacteroides abscessus (strain ATCC 19977 / DSM 44196 / CCUG 20993 / CIP 104536 / JCM 13569 / NCTC 13031 / TMC 1543 / L948) (Mycobacterium abscessus).